The chain runs to 118 residues: Group 1 truncated hemoglobin GlbN (118 aa).

A heme-binding site is contributed by H70.

Belongs to the truncated hemoglobin family. Group I subfamily. Monomer. The cofactor is heme.

It localises to the membrane. In Nostoc sp. (strain MUN 8820), this protein is Group 1 truncated hemoglobin GlbN (glbN).